Consider the following 437-residue polypeptide: GTPase Der (437 aa).

EngA-type G domains are found at residues 4-167 and 175-352; these read PIVA…PDNA and IHFS…QHHR. GTP contacts are provided by residues 10 to 17, 57 to 61, 119 to 122, 181 to 188, 229 to 233, and 294 to 297; these read GRPNVGKS, DTGGI, NKVD, DTAGI, and NKWD. The region spanning 353-437 is the KH-like domain; the sequence is QRIQSAVLND…PIHLIKRQRQ (85 aa).

The protein belongs to the TRAFAC class TrmE-Era-EngA-EngB-Septin-like GTPase superfamily. EngA (Der) GTPase family. Associates with the 50S ribosomal subunit.

Functionally, GTPase that plays an essential role in the late steps of ribosome biogenesis. The sequence is that of GTPase Der from Limosilactobacillus reuteri (strain DSM 20016) (Lactobacillus reuteri).